The primary structure comprises 227 residues: tRNA (guanine-N(1)-)-methyltransferase (227 aa).

S-adenosyl-L-methionine is bound by residues Gly107 and 127 to 132; that span reads LGDFIL.

This sequence belongs to the RNA methyltransferase TrmD family. Homodimer.

Its subcellular location is the cytoplasm. It catalyses the reaction guanosine(37) in tRNA + S-adenosyl-L-methionine = N(1)-methylguanosine(37) in tRNA + S-adenosyl-L-homocysteine + H(+). Its function is as follows. Specifically methylates guanosine-37 in various tRNAs. This is tRNA (guanine-N(1)-)-methyltransferase from Mesomycoplasma hyopneumoniae (strain 7448) (Mycoplasma hyopneumoniae).